The sequence spans 1218 residues: NACHT, LRR and PYD domains-containing protein 1a allele 3 (1218 aa).

Polar residues predominate over residues 1–29 (MGESQSKQESNTRVAQHGSQQDVDPTFQT). Disordered regions lie at residues 1–44 (MGES…QVEQ) and 71–91 (EMDH…DRSE). Basic residues predominate over residues 77–87 (RRHSHQSKKKL). One can recognise an NACHT domain in the interval 175 to 484 (QLVIIEGAAG…EFFAAMSYIL (310 aa)). An ATP-binding site is contributed by 181 to 188 (GAAGIGKS). LRR repeat units lie at residues 343–364 (KERN…LTLC), 673–693 (NLEE…RSLC), and 730–750 (RLAE…RQLC). Polar residues predominate over residues 799-815 (TMPTENTDGEESLTSSK). The segment at 799 to 842 (TMPTENTDGEESLTSSKQQQQQSGDKHMEPLGTDDDFWGPSGPV) is disordered. The segment at 835 to 968 (FWGPSGPVST…HFAVLENPSF (134 aa)) is ZU5. An FIIND domain is found at 835 to 1118 (FWGPSGPVST…LRPALPRMAS (284 aa)). The segment at 969-1118 (SPMGVLLRMI…LRPALPRMAS (150 aa)) is UPA. One can recognise a CARD domain in the interval 1122-1211 (DAPALLHFVD…HLIMDLLEKS (90 aa)).

It belongs to the NLRP family. As to quaternary structure, interacts (via LRR repeats) with BCL2 and BCL2L1 (via the loop between motifs BH4 and BH3). Interacts with NOD2; this interaction is enhanced in the presence of muramyl dipeptide (MDP) and increases IL1B release. Interacts with EIF2AK2/PKR; this interaction requires EIF2AK2 activity, is accompanied by EIF2AK2 autophosphorylation and promotes inflammasome assembly in response to danger-associated signals. Interacts with MEFV; this interaction targets Nlrp1a to degradation by autophagy, hence preventing excessive IL1B- and IL18-mediated inflammation. Interacts with DPP9; leading to inhibit activation of the inflammasome. DPP9 acts via formation of a ternary complex, composed of a DPP9 homodimer, one full-length NLRP1 protein, and one cleaved C-terminus of Nlrp1a (NACHT, LRR and PYD domains-containing protein 1a, C-terminus). Interacts with DPP8; leading to inhibit activation of the inflammasome, probably via formation of a ternary complex with DPP8. In terms of assembly, interacts with the C-terminal part of Nlrp1a (NACHT, LRR and PYD domains-containing protein 1a, C-terminus) in absence of pathogens and other damage-associated signals. Interacts with the N-terminal part of Nlrp1a (NACHT, LRR and PYD domains-containing protein 1a, N-terminus) in absence of pathogens and other damage-associated signals. Homomultimer; forms the Nlrp1a inflammasome polymeric complex, a filament composed of homopolymers of this form in response to pathogens and other damage-associated signals. The Nlrp1a inflammasome polymeric complex directly recruits pro-caspase-1 (proCASP1) independently of PYCARD/ASC. Interacts (via CARD domain) with CASP1 (via CARD domain); leading to CASP1 activation. Post-translationally, autocatalytically cleaved. Autocatalytic cleavage in FIIND region occurs constitutively, prior to activation signals, and is required for inflammasome activity (IL1B release), possibly by facilitating CASP1 binding. Both N- and C-terminal parts remain associated non-covalently. In terms of processing, ubiquitinated in response to pathogen-associated signals, leading to its degradation by the proteasome and subsequent release of the cleaved C-terminal part of the protein (NACHT, LRR and PYD domains-containing protein 1a, C-terminus), which polymerizes and forms the Nlrp1a inflammasome.

It localises to the cytoplasm. It is found in the cytosol. The protein resides in the nucleus. The protein localises to the inflammasome. Its activity is regulated as follows. Activated by pathogens and other damage-associated signals: activation promotes ubiquitination and degradation of the N-terminal part, releasing the cleaved C-terminal part of the protein (NACHT, LRR and PYD domains-containing protein 1a, C-terminus), which polymerizes and forms the Nlrp1a inflammasome. Nlrp1a inflammasome is inhibited by DPP8 and DPP9, which sequester the C-terminal fragment of Nlrp1a (NACHT, LRR and PYD domains-containing protein 1a, C-terminus) in a ternary complex, thereby preventing Nlrp1a oligomerization and activation. Nlrp1a inflammasome is strongly activated by Val-boroPro (Talabostat, PT-100), an inhibitor of dipeptidyl peptidases DPP8 and DPP9. Val-boroPro relieves inhibition of DPP8 and/or DPP9 by promoting disruption of the ternary complex, releasing its C-terminal part from autoinhibition. Not activated by cleavage by B.anthracis lethal toxin (LT) endopeptidase. Acts as the sensor component of the Nlrp1a inflammasome, which mediates inflammasome activation in response to various pathogen-associated signals, leading to subsequent pyroptosis. Inflammasomes are supramolecular complexes that assemble in the cytosol in response to pathogens and other damage-associated signals and play critical roles in innate immunity and inflammation. Acts as a recognition receptor (PRR): recognizes specific pathogens and other damage-associated signals, such as Val-boroPro inhibitor, and mediates the formation of the inflammasome polymeric complex. In response to pathogen-associated signals, the N-terminal part of Nlrp1a is degraded by the proteasome, releasing the cleaved C-terminal part of the protein (NACHT, LRR and PYD domains-containing protein 1a, C-terminus), which polymerizes to initiate the formation of the inflammasome complex: the inflammasome directly recruits pro-caspase-1 (proCASP1) independently of PYCARD/ASC and promotes caspase-1 (CASP1) activation, which subsequently cleaves and activates inflammatory cytokines IL1B and IL18 and gasdermin-D (GSDMD), leading to pyroptosis. In the absence of GSDMD expression, the Nlrp1a inflammasome is able to recruit and activate CASP8, leading to activation of gasdermin-E (GSDME). Its function is as follows. Constitutes the precursor of the Nlrp1a inflammasome, which mediates autoproteolytic processing within the FIIND domain to generate the N-terminal and C-terminal parts, which are associated non-covalently in absence of pathogens and other damage-associated signals. In terms of biological role, regulatory part that prevents formation of the Nlrp1a inflammasome: in absence of pathogens and other damage-associated signals, interacts with the C-terminal part of Nlrp1a (NACHT, LRR and PYD domains-containing protein 1a, C-terminus), preventing activation of the Nlrp1a inflammasome. In response to pathogen-associated signals, this part is ubiquitinated by the N-end rule pathway and degraded by the proteasome, releasing the cleaved C-terminal part of the protein, which polymerizes and forms the Nlrp1a inflammasome. Functionally, constitutes the active part of the Nlrp1a inflammasome. In absence of pathogens and other damage-associated signals, interacts with the N-terminal part of Nlrp1a (NACHT, LRR and PYD domains-containing protein 1a, N-terminus), preventing activation of the Nlrp1a inflammasome. In response to pathogen-associated signals, the N-terminal part of Nlrp1a is degraded by the proteasome, releasing this form, which polymerizes to form the Nlrp1a inflammasome complex: the Nlrp1a inflammasome complex then directly recruits pro-caspase-1 (proCASP1) and promotes caspase-1 (CASP1) activation, leading to gasdermin-D (GSDMD) cleavage and subsequent pyroptosis. The polypeptide is NACHT, LRR and PYD domains-containing protein 1a allele 3 (Rattus norvegicus (Rat)).